Here is a 177-residue protein sequence, read N- to C-terminus: Large ribosomal subunit protein uL6 (177 aa).

The protein belongs to the universal ribosomal protein uL6 family. Part of the 50S ribosomal subunit.

Its function is as follows. This protein binds to the 23S rRNA, and is important in its secondary structure. It is located near the subunit interface in the base of the L7/L12 stalk, and near the tRNA binding site of the peptidyltransferase center. The polypeptide is Large ribosomal subunit protein uL6 (Acidovorax ebreus (strain TPSY) (Diaphorobacter sp. (strain TPSY))).